Reading from the N-terminus, the 293-residue chain is MTMRQCAIYGKGGIGKSTTTQNLVAALAEMGKKVMIVGCDPKADSTRLILHAKAQNTIMEMAAEVGSVEDLELEDVLQIGYGDVRCAESGGPEPGVGCAGRGVITAINFLEEEGAYEEDLDFVFYDVLGDVVCGGFAMPIRENKAQEIYIVCSGEMMAMYAANNISKGIVKYAKSGKVRLGGLICNSRKTDREDELIIALAEKLGTQMIHFVPRDNIVQRAEIRRMTVIEYDPTCQQANEYRQLAQKIVNNTKKVVPTPCTMDELESLLMEFGIMEEEDTSIIGKTAAEENAA.

ATP is bound at residue 10-17 (GKGGIGKS). [4Fe-4S] cluster is bound at residue Cys98. Position 101 is an ADP-ribosylarginine; by dinitrogenase reductase ADP-ribosyltransferase (Arg101). Residue Cys133 participates in [4Fe-4S] cluster binding.

The protein belongs to the NifH/BchL/ChlL family. Homodimer. Requires [4Fe-4S] cluster as cofactor. In terms of processing, the reversible ADP-ribosylation of Arg-101 inactivates the nitrogenase reductase and regulates nitrogenase activity.

It carries out the reaction N2 + 8 reduced [2Fe-2S]-[ferredoxin] + 16 ATP + 16 H2O = H2 + 8 oxidized [2Fe-2S]-[ferredoxin] + 2 NH4(+) + 16 ADP + 16 phosphate + 6 H(+). Its function is as follows. The key enzymatic reactions in nitrogen fixation are catalyzed by the nitrogenase complex, which has 2 components: the iron protein and the molybdenum-iron protein. This is Nitrogenase iron protein from Klebsiella pneumoniae (strain 342).